The sequence spans 152 residues: Sec-independent protein translocase protein TatB (152 aa).

Residues 1–21 traverse the membrane as a helical segment; the sequence is MFGISFSELLLVGLVALLVLG. Residues 98 to 115 show a composition bias toward low complexity; sequence HAPGAATVAEAPPASEVP. The tract at residues 98 to 152 is disordered; that stretch reads HAPGAATVAEAPPASEVPAPLPSTPAPAPTAEPAAPVATPATTAPHDSTLPPRAP. Pro residues predominate over residues 116–127; that stretch reads APLPSTPAPAPT. Positions 128-142 are enriched in low complexity; sequence AEPAAPVATPATTAP.

This sequence belongs to the TatB family. As to quaternary structure, the Tat system comprises two distinct complexes: a TatABC complex, containing multiple copies of TatA, TatB and TatC subunits, and a separate TatA complex, containing only TatA subunits. Substrates initially bind to the TatABC complex, which probably triggers association of the separate TatA complex to form the active translocon.

Its subcellular location is the cell inner membrane. Part of the twin-arginine translocation (Tat) system that transports large folded proteins containing a characteristic twin-arginine motif in their signal peptide across membranes. Together with TatC, TatB is part of a receptor directly interacting with Tat signal peptides. TatB may form an oligomeric binding site that transiently accommodates folded Tat precursor proteins before their translocation. The polypeptide is Sec-independent protein translocase protein TatB (Pseudomonas fluorescens (strain ATCC BAA-477 / NRRL B-23932 / Pf-5)).